The chain runs to 523 residues: Lysine--tRNA ligase (523 aa).

The 'HIGH' region motif lies at 30 to 38 (PSGYVHVGN). The Zn(2+) site is built by aspartate 95, cysteine 99, histidine 100, histidine 106, cysteine 177, histidine 180, cysteine 199, and histidine 203. The 'KMSKS' region motif lies at 279–283 (KMSGS).

Belongs to the class-I aminoacyl-tRNA synthetase family. It depends on Zn(2+) as a cofactor.

Its subcellular location is the cytoplasm. The catalysed reaction is tRNA(Lys) + L-lysine + ATP = L-lysyl-tRNA(Lys) + AMP + diphosphate. The sequence is that of Lysine--tRNA ligase (lysS) from Pyrococcus horikoshii (strain ATCC 700860 / DSM 12428 / JCM 9974 / NBRC 100139 / OT-3).